A 192-amino-acid chain; its full sequence is 7-methyl-GTP pyrophosphatase (192 aa).

Asp-69 serves as the catalytic Proton acceptor.

The protein belongs to the Maf family. YceF subfamily. The cofactor is a divalent metal cation.

The protein resides in the cytoplasm. The catalysed reaction is N(7)-methyl-GTP + H2O = N(7)-methyl-GMP + diphosphate + H(+). Functionally, nucleoside triphosphate pyrophosphatase that hydrolyzes 7-methyl-GTP (m(7)GTP). May have a dual role in cell division arrest and in preventing the incorporation of modified nucleotides into cellular nucleic acids. This Pseudomonas fluorescens (strain Pf0-1) protein is 7-methyl-GTP pyrophosphatase.